Reading from the N-terminus, the 91-residue chain is Uteroglobin (91 aa).

Positions 1-21 are cleaved as a signal peptide; it reads MKLAITLALVTLALLCSPASA.

Belongs to the secretoglobin family. In terms of assembly, antiparallel homodimer; disulfide-linked. Interaction with LMBR1L is controversial. In terms of tissue distribution, synthesized in the uterus and lung.

It localises to the secreted. Its function is as follows. Uteroglobin binds progesterone specifically and with high affinity. It may regulate progesterone concentrations reaching the blastocyst. It is also a potent inhibitor of phospholipase A2. This is Uteroglobin (SCGB1A1) from Oryctolagus cuniculus (Rabbit).